The following is a 559-amino-acid chain: Potassium-transporting ATPase potassium-binding subunit (559 aa).

The next 13 helical transmembrane spans lie at 5-25, 27-47, 63-83, 132-152, 170-190, 253-273, 283-303, 327-347, 356-376, 379-399, 416-436, 484-504, and 524-544; these read GFLLIASFLLILLVLAKPLGS, LARLIAAVPLPGVAGVERILW, LLALLTLNLLGLGILFCLLFW, GLTVQNFLSAATGIAVVFALI, LVRITLWILFPVALIIALFFI, LAQMLAIFLIPAALCFAFGEA, LLWAMSFIFVVCVAVVMWAEV, FGVLASSLFAVVTTAASCGAV, ALGGMVPMWLMQIGEVVFGGV, GLYGMLLFVLLAVFIAGLMIG, MTALAILVTPMLVLLGSALAM, LLAFCMFVGRFGVIIPVMAIA, and GALFIGLLIGTVLLVGALTFI.

The protein belongs to the KdpA family. In terms of assembly, the system is composed of three essential subunits: KdpA, KdpB and KdpC.

It is found in the cell inner membrane. Its function is as follows. Part of the high-affinity ATP-driven potassium transport (or Kdp) system, which catalyzes the hydrolysis of ATP coupled with the electrogenic transport of potassium into the cytoplasm. This subunit binds the periplasmic potassium ions and delivers the ions to the membrane domain of KdpB through an intramembrane tunnel. The polypeptide is Potassium-transporting ATPase potassium-binding subunit (Salmonella enteritidis PT4 (strain P125109)).